Here is an 87-residue protein sequence, read N- to C-terminus: Small ribosomal subunit protein bS20 (87 aa).

The segment covering 1–22 (MANIKSAKKRAVQSEKRRKHNA) has biased composition (basic residues). The interval 1–27 (MANIKSAKKRAVQSEKRRKHNASSRSM) is disordered.

It belongs to the bacterial ribosomal protein bS20 family.

In terms of biological role, binds directly to 16S ribosomal RNA. This is Small ribosomal subunit protein bS20 from Pectobacterium atrosepticum (strain SCRI 1043 / ATCC BAA-672) (Erwinia carotovora subsp. atroseptica).